The primary structure comprises 350 residues: Ketol-acid reductoisomerase (NADP(+)) (350 aa).

Positions 3–183 (AQIWYEDDGD…GALRAGAIKT (181 aa)) constitute a KARI N-terminal Rossmann domain. NADP(+) contacts are provided by residues 26–29 (YGSQ), Arg49, Ser52, Ser54, and 84–87 (DQYQ). His109 is an active-site residue. NADP(+) is bound at residue Gly135. A KARI C-terminal knotted domain is found at 184–327 (TFKEETETDL…PKLRAMFSWN (144 aa)). Mg(2+)-binding residues include Asp192, Glu196, Glu228, and Glu232. Position 253 (Ser253) interacts with substrate.

This sequence belongs to the ketol-acid reductoisomerase family. Requires Mg(2+) as cofactor.

It carries out the reaction (2R)-2,3-dihydroxy-3-methylbutanoate + NADP(+) = (2S)-2-acetolactate + NADPH + H(+). The catalysed reaction is (2R,3R)-2,3-dihydroxy-3-methylpentanoate + NADP(+) = (S)-2-ethyl-2-hydroxy-3-oxobutanoate + NADPH + H(+). It functions in the pathway amino-acid biosynthesis; L-isoleucine biosynthesis; L-isoleucine from 2-oxobutanoate: step 2/4. It participates in amino-acid biosynthesis; L-valine biosynthesis; L-valine from pyruvate: step 2/4. In terms of biological role, involved in the biosynthesis of branched-chain amino acids (BCAA). Catalyzes an alkyl-migration followed by a ketol-acid reduction of (S)-2-acetolactate (S2AL) to yield (R)-2,3-dihydroxy-isovalerate. In the isomerase reaction, S2AL is rearranged via a Mg-dependent methyl migration to produce 3-hydroxy-3-methyl-2-ketobutyrate (HMKB). In the reductase reaction, this 2-ketoacid undergoes a metal-dependent reduction by NADPH to yield (R)-2,3-dihydroxy-isovalerate. The sequence is that of Ketol-acid reductoisomerase (NADP(+)) from Bifidobacterium animalis subsp. lactis (strain AD011).